We begin with the raw amino-acid sequence, 441 residues long: Serine carboxypeptidase-like 4 (441 aa).

Residues 1 to 29 form the signal peptide; that stretch reads MANNNVYSVLKSLLLLLHLVFLSKQHVDS. 3 disulfides stabilise this stretch: Cys-88–Cys-331, Cys-252–Cys-266, and Cys-290–Cys-297. Asn-109 carries an N-linked (GlcNAc...) asparagine glycan. Residue Ser-184 is part of the active site. Asn-350 is a glycosylation site (N-linked (GlcNAc...) asparagine). Asp-366 is an active-site residue. Asn-382 carries an N-linked (GlcNAc...) asparagine glycan. His-419 is a catalytic residue.

This sequence belongs to the peptidase S10 family. As to expression, ubiquitous.

It is found in the secreted. Its function is as follows. Probable carboxypeptidase. The protein is Serine carboxypeptidase-like 4 (SCPL4) of Arabidopsis thaliana (Mouse-ear cress).